The chain runs to 343 residues: Anthranilate phosphoribosyltransferase (343 aa).

5-phospho-alpha-D-ribose 1-diphosphate is bound by residues G86, 89 to 90 (GD), T94, 96 to 99 (NIST), 114 to 122 (KHGNRSASG), and S126. G86 serves as a coordination point for anthranilate. Mg(2+) is bound at residue S98. An anthranilate-binding site is contributed by N117. Position 172 (R172) interacts with anthranilate. The Mg(2+) site is built by D231 and E232.

Belongs to the anthranilate phosphoribosyltransferase family. As to quaternary structure, homodimer. It depends on Mg(2+) as a cofactor.

It catalyses the reaction N-(5-phospho-beta-D-ribosyl)anthranilate + diphosphate = 5-phospho-alpha-D-ribose 1-diphosphate + anthranilate. It functions in the pathway amino-acid biosynthesis; L-tryptophan biosynthesis; L-tryptophan from chorismate: step 2/5. Catalyzes the transfer of the phosphoribosyl group of 5-phosphorylribose-1-pyrophosphate (PRPP) to anthranilate to yield N-(5'-phosphoribosyl)-anthranilate (PRA). The protein is Anthranilate phosphoribosyltransferase of Synechococcus sp. (strain JA-2-3B'a(2-13)) (Cyanobacteria bacterium Yellowstone B-Prime).